We begin with the raw amino-acid sequence, 273 residues long: MRPRKRFGQHWLTDQQILDEIVAAANLQPTDRVLEIGPGKGALTSRLLPQVEALLSVEIDRDLCKYMVKNYGDRPNFLLLEADYLQTDINEFLGDFPQFQNPRKVVANIPYNITGPILEKLLGTIDRPNSNPFESIVLLIQKEVGDRLVAHPCTKAFGALTLRVQYLADCETVCVVPPKAFYPKPKVESVVVRLRPRPLAQPAQNPKLLATLIKVGFASKRKMLRNNLKSLYNPEILDPIFADLDISPQARGEEVDLLQWIALSDRLNDYPKE.

The S-adenosyl-L-methionine site is built by His-10, Leu-12, Gly-37, Glu-58, Asp-83, and Asn-108.

It belongs to the class I-like SAM-binding methyltransferase superfamily. rRNA adenine N(6)-methyltransferase family. RsmA subfamily.

Its subcellular location is the cytoplasm. It carries out the reaction adenosine(1518)/adenosine(1519) in 16S rRNA + 4 S-adenosyl-L-methionine = N(6)-dimethyladenosine(1518)/N(6)-dimethyladenosine(1519) in 16S rRNA + 4 S-adenosyl-L-homocysteine + 4 H(+). In terms of biological role, specifically dimethylates two adjacent adenosines (A1518 and A1519) in the loop of a conserved hairpin near the 3'-end of 16S rRNA in the 30S particle. May play a critical role in biogenesis of 30S subunits. The protein is Ribosomal RNA small subunit methyltransferase A of Picosynechococcus sp. (strain ATCC 27264 / PCC 7002 / PR-6) (Agmenellum quadruplicatum).